The sequence spans 630 residues: 1-deoxy-D-xylulose-5-phosphate synthase (630 aa).

Residues His-72 and 113–115 (GHS) contribute to the thiamine diphosphate site. Position 144 (Asp-144) interacts with Mg(2+). Residues 145–146 (GA), Asn-173, Tyr-284, and Glu-367 contribute to the thiamine diphosphate site. Asn-173 lines the Mg(2+) pocket.

It belongs to the transketolase family. DXPS subfamily. As to quaternary structure, homodimer. Mg(2+) serves as cofactor. It depends on thiamine diphosphate as a cofactor.

The enzyme catalyses D-glyceraldehyde 3-phosphate + pyruvate + H(+) = 1-deoxy-D-xylulose 5-phosphate + CO2. It participates in metabolic intermediate biosynthesis; 1-deoxy-D-xylulose 5-phosphate biosynthesis; 1-deoxy-D-xylulose 5-phosphate from D-glyceraldehyde 3-phosphate and pyruvate: step 1/1. In terms of biological role, catalyzes the acyloin condensation reaction between C atoms 2 and 3 of pyruvate and glyceraldehyde 3-phosphate to yield 1-deoxy-D-xylulose-5-phosphate (DXP). This chain is 1-deoxy-D-xylulose-5-phosphate synthase, found in Bacillus cereus (strain B4264).